We begin with the raw amino-acid sequence, 73 residues long: U-scoloptoxin(03)-Ssd1b (73 aa).

The first 23 residues, 1-23 (MKSSMAVLLVMGLIIFTLDKCYS), serve as a signal peptide directing secretion.

Contains 3 disulfide bonds. As to expression, expressed by the venom gland.

The protein localises to the secreted. This is U-scoloptoxin(03)-Ssd1b from Scolopendra dehaani (Thai centipede).